Reading from the N-terminus, the 154-residue chain is 3-hydroxyacyl-[acyl-carrier-protein] dehydratase FabZ (154 aa).

Residue His55 is part of the active site.

The protein belongs to the thioester dehydratase family. FabZ subfamily.

It localises to the cytoplasm. It carries out the reaction a (3R)-hydroxyacyl-[ACP] = a (2E)-enoyl-[ACP] + H2O. Functionally, involved in unsaturated fatty acids biosynthesis. Catalyzes the dehydration of short chain beta-hydroxyacyl-ACPs and long chain saturated and unsaturated beta-hydroxyacyl-ACPs. This Nitratidesulfovibrio vulgaris (strain ATCC 29579 / DSM 644 / CCUG 34227 / NCIMB 8303 / VKM B-1760 / Hildenborough) (Desulfovibrio vulgaris) protein is 3-hydroxyacyl-[acyl-carrier-protein] dehydratase FabZ.